The primary structure comprises 219 residues: Uracil-DNA glycosylase (219 aa).

The active-site Proton acceptor is the Asp59.

The protein belongs to the uracil-DNA glycosylase (UDG) superfamily. UNG family.

It is found in the cytoplasm. It carries out the reaction Hydrolyzes single-stranded DNA or mismatched double-stranded DNA and polynucleotides, releasing free uracil.. In terms of biological role, excises uracil residues from the DNA which can arise as a result of misincorporation of dUMP residues by DNA polymerase or due to deamination of cytosine. The sequence is that of Uracil-DNA glycosylase from Staphylococcus haemolyticus (strain JCSC1435).